The chain runs to 206 residues: Translation machinery-associated protein 22 (206 aa).

One can recognise an SUI1 domain in the interval 98 to 169 (VVIKREARTK…EVEKYIHSLL (72 aa)). Residues 184–206 (SQKKKKKPTDEANSNNNNNNNNK) are disordered. The segment covering 196 to 206 (NSNNNNNNNNK) has biased composition (low complexity).

Belongs to the DENR family. In terms of assembly, interacts with the 40S ribosomal subunit.

It is found in the cytoplasm. This is Translation machinery-associated protein 22 (TMA22) from Vanderwaltozyma polyspora (strain ATCC 22028 / DSM 70294 / BCRC 21397 / CBS 2163 / NBRC 10782 / NRRL Y-8283 / UCD 57-17) (Kluyveromyces polysporus).